A 248-amino-acid polypeptide reads, in one-letter code: MKLIVNADDFGYSKGVNLGIVEAHREGVVTSATLMVNMEGFEHAVGLAKEHPTLGVGIHLVLTCGSPVSQDVPSLTDGEGRFRRGQDHLISAVPEEIERELRAQLGRFVAAGLKLTHIDSHHHVHAHPAILPIVLKLAEEYRVPVRYPWLFGTQEKRDQLSILTTEGFSHHFYGDDLTVQSFVRIVEDMADYPVVEIMTHPAYLDEAVLTGSSYAKQRTTELKILTAAELKQYIHDQKIQLVTFSELG.

The Mg(2+) site is built by His-59 and His-121.

It belongs to the YdjC deacetylase family. It depends on Mg(2+) as a cofactor.

Its function is as follows. Probably catalyzes the deacetylation of acetylated carbohydrates an important step in the degradation of oligosaccharides. This Brevibacillus brevis (strain 47 / JCM 6285 / NBRC 100599) protein is Carbohydrate deacetylase.